The sequence spans 511 residues: E3 ubiquitin-protein ligase TRIM7 (511 aa).

Residues 29–82 form an RING-type zinc finger; sequence CSICLELFREPVSVECGHSFCRACIGRCWERPGAGSVGAATRAPPFPLPCPQCR. Ser107 carries the post-translational modification Phosphoserine; by RPS6KA5. The segment at 125-166 adopts a B box-type zinc-finger fold; it reads AAAARCGQHGEPFKLYCQDDGRAICVVCDRAREHREHAVLPL. Zn(2+) contacts are provided by Cys130, His133, Cys152, and His158. Residues 166–263 are a coiled coil; it reads LDEAVQEAKE…AQLGVEITQL (98 aa). The B30.2/SPRY domain occupies 324–511; sequence MLKKFKEDLR…STGTYLRIWP (188 aa).

This sequence belongs to the TRIM/RBCC family. In terms of assembly, forms homodimers. Interacts with GNIP2. Interacts with GYG1. Interacts with RNF187 (via C-terminus). Post-translationally, phosphorylated at Ser-107 by RPS6KA5/MSK1, which stimulates the ubiquitin ligase activity. Auto-ubiquitinates via 'Lys-63'-linked polyubiquitination. Skeletal muscle and placenta, at lower levels in heart, brain and pancreas. Isoform 1 is widely expressed with high level in testis, kidney and heart.

It localises to the nucleus. It is found in the cytoplasm. The protein resides in the golgi apparatus. It carries out the reaction S-ubiquitinyl-[E2 ubiquitin-conjugating enzyme]-L-cysteine + [acceptor protein]-L-lysine = [E2 ubiquitin-conjugating enzyme]-L-cysteine + N(6)-ubiquitinyl-[acceptor protein]-L-lysine.. The protein operates within protein modification; protein ubiquitination. Functionally, E3 ubiquitin-protein ligase that have both tumor-promoting and tumor-suppressing activities and functions in several biological processes including innate immunity, regulation of ferroptosis as well as cell proliferation and migration. Acts as an antiviral effector against multiple viruses by targeting specific viral proteins for ubiquitination and degradation including norovirus NTPase protein or SARS-CoV-2 NSP5 and NSP8 proteins. Mechanistically, recognizes the C-terminal glutamine-containing motif usually generated by viral proteases that process the polyproteins and trigger their ubiquitination and subsequent degradation. Mediates 'Lys-63'-linked polyubiquitination and stabilization of the JUN coactivator RNF187 in response to growth factor signaling via the MEK/ERK pathway, thereby regulating JUN transactivation and cellular proliferation. Promotes the TLR4-mediated signaling activation through its E3 ligase domain leading to production of pro-inflammatory cytokines and type I interferon. Also plays a negative role in the regulation of exogenous cytosolic DNA virus-triggered immune response. Mechanistically, enhances the 'Lys-48'-linked ubiquitination of STING1 leading to its proteasome-dependent degradation. Mediates the ubiquitination of the SIN3-HDAC chromatin remodeling complex component BRMS1. Modulates NCOA4-mediated ferritinophagy and ferroptosis in glioblastoma cells by ubiquitinating NCOA4, leading to its degradation. In terms of biological role, (Microbial infection) Promotes Zika virus replication by mediating envelope protein E ubiquitination. This chain is E3 ubiquitin-protein ligase TRIM7 (TRIM7), found in Homo sapiens (Human).